The chain runs to 415 residues: 3-isopropylmalate dehydratase large subunit (415 aa).

Cys-297, Cys-355, and Cys-358 together coordinate [4Fe-4S] cluster.

This sequence belongs to the aconitase/IPM isomerase family. LeuC type 2 subfamily. Heterodimer of LeuC and LeuD. It depends on [4Fe-4S] cluster as a cofactor.

It carries out the reaction (2R,3S)-3-isopropylmalate = (2S)-2-isopropylmalate. It participates in amino-acid biosynthesis; L-leucine biosynthesis; L-leucine from 3-methyl-2-oxobutanoate: step 2/4. Its function is as follows. Catalyzes the isomerization between 2-isopropylmalate and 3-isopropylmalate, via the formation of 2-isopropylmaleate. The sequence is that of 3-isopropylmalate dehydratase large subunit from Caldivirga maquilingensis (strain ATCC 700844 / DSM 13496 / JCM 10307 / IC-167).